The chain runs to 452 residues: Cell division protein FtsZ (452 aa).

Residues 24–28, 111–113, glutamate 142, arginine 146, and aspartate 190 contribute to the GTP site; these read GAGSN and GTG.

The protein belongs to the FtsZ family. Homodimer. Polymerizes to form a dynamic ring structure in a strictly GTP-dependent manner. Interacts directly with several other division proteins.

Its subcellular location is the cytoplasm. Functionally, essential cell division protein that forms a contractile ring structure (Z ring) at the future cell division site. The regulation of the ring assembly controls the timing and the location of cell division. One of the functions of the FtsZ ring is to recruit other cell division proteins to the septum to produce a new cell wall between the dividing cells. Binds GTP and shows GTPase activity. The protein is Cell division protein FtsZ of Rickettsia typhi (strain ATCC VR-144 / Wilmington).